Here is a 621-residue protein sequence, read N- to C-terminus: Methionine--tRNA ligase (621 aa).

Positions 11 to 21 (PYANGPRHIGH) match the 'HIGH' region motif. Residues Cys-143, Cys-146, Cys-156, and Cys-159 each contribute to the Zn(2+) site. The short motif at 347–351 (KFSSS) is the 'KMSKS' region element. ATP is bound at residue Ser-350.

Belongs to the class-I aminoacyl-tRNA synthetase family. MetG type 1 subfamily. As to quaternary structure, monomer. Zn(2+) serves as cofactor.

It localises to the cytoplasm. It catalyses the reaction tRNA(Met) + L-methionine + ATP = L-methionyl-tRNA(Met) + AMP + diphosphate. Is required not only for elongation of protein synthesis but also for the initiation of all mRNA translation through initiator tRNA(fMet) aminoacylation. This chain is Methionine--tRNA ligase, found in Bifidobacterium longum (strain NCC 2705).